Here is a 718-residue protein sequence, read N- to C-terminus: Scarecrow-like protein 9 (718 aa).

A disordered region spans residues V305–K338. Residues G316–G328 show a composition bias toward basic residues. The GRAS domain maps to Q335 to K713. The leucine repeat I (LRI) stretch occupies residues V342–Q402. The VHIID stretch occupies residues H421–G484. The VHIID signature appears at V452–D456. Residues E500–D532 are leucine repeat II (LRII). Residues T541–N635 are PFYRE. Residues A638–K713 are SAW.

It belongs to the GRAS family. Expressed in cotyledons, leaves and flowers, and in the elongation zone in root.

It is found in the nucleus. In terms of biological role, probable transcription factor involved in plant development. The protein is Scarecrow-like protein 9 (SCL9) of Arabidopsis thaliana (Mouse-ear cress).